The primary structure comprises 291 residues: uncharacterized protein (291 aa).

3 disordered regions span residues 1-62, 220-242, and 255-291; these read MELR…SSKK, PLPA…TDKV, and ENNK…SRKK. The segment covering 18-41 has biased composition (basic and acidic residues); it reads EPAKNKSERSIESNERVGTREAKS. Polar residues-rich tracts occupy residues 42–58 and 226–236; these read ENTS…ATTD and PSLNLSPQKVP. Serine 267 bears the Phosphoserine mark.

It is found in the cytoplasm. The protein resides in the nucleus. This is an uncharacterized protein from Saccharomyces cerevisiae (strain ATCC 204508 / S288c) (Baker's yeast).